The chain runs to 252 residues: 5-oxoprolinase subunit A 1 (252 aa).

This sequence belongs to the LamB/PxpA family. Forms a complex composed of PxpA, PxpB and PxpC.

The enzyme catalyses 5-oxo-L-proline + ATP + 2 H2O = L-glutamate + ADP + phosphate + H(+). Catalyzes the cleavage of 5-oxoproline to form L-glutamate coupled to the hydrolysis of ATP to ADP and inorganic phosphate. In Pseudomonas aeruginosa (strain ATCC 15692 / DSM 22644 / CIP 104116 / JCM 14847 / LMG 12228 / 1C / PRS 101 / PAO1), this protein is 5-oxoprolinase subunit A 1.